We begin with the raw amino-acid sequence, 255 residues long: tRNA (guanine-N(1)-)-methyltransferase (255 aa).

S-adenosyl-L-methionine-binding positions include G117 and 137–142 (LGDFVL).

The protein belongs to the RNA methyltransferase TrmD family. Homodimer.

The protein resides in the cytoplasm. The catalysed reaction is guanosine(37) in tRNA + S-adenosyl-L-methionine = N(1)-methylguanosine(37) in tRNA + S-adenosyl-L-homocysteine + H(+). In terms of biological role, specifically methylates guanosine-37 in various tRNAs. The protein is tRNA (guanine-N(1)-)-methyltransferase of Paraburkholderia phymatum (strain DSM 17167 / CIP 108236 / LMG 21445 / STM815) (Burkholderia phymatum).